Consider the following 307-residue polypeptide: MTETTKTHVILLACGSFNPITKGHIQMFERARDYLHKTGRFIVIGGIVSPVHDSYGKQGLVSSRHRLIMCQLAVQNSDWIRVDPWECYQDTWQTTCSVLEHHRDLMKRVTGCILSNVNTPSMTPVIGQPQHENTQPIYQNSNVPTKPTAAKILGKVGESLGRICCVRPPVERFTFVDENANLGTVMRYEEIELRILLLCGSDLLESFCIPGLWNEADMEVIVGDFGIVVVPRDAADADRIMNHSSILRKYKNNIMVVKDDINHPMSVVSSTKSRLALQHGDGHVVDYLSQPVIDYILKSQLYINASG.

2 residues coordinate NAD(+): serine 16 and phenylalanine 17. Histidine 24 is a binding site for ATP. NAD(+) is bound by residues tryptophan 92 and threonine 95. 2 S-palmitoyl cysteine lipidation sites follow: cysteine 164 and cysteine 165. NAD(+) is bound by residues glycine 200, aspartate 202, leucine 212, tryptophan 213, and arginine 232. ATP is bound at residue threonine 271 to arginine 274.

This sequence belongs to the eukaryotic NMN adenylyltransferase family. As to quaternary structure, monomer. Mg(2+) is required as a cofactor. In terms of processing, degraded in response to injured neurite. Degradation is caused by polyubiquitination by MYCBP2 after recognition by FBXO45. Post-translationally, palmitoylated; palmitoylation is required for membrane association.

It localises to the golgi apparatus membrane. The protein localises to the cytoplasmic vesicle membrane. Its subcellular location is the cytoplasm. The protein resides in the cell projection. It is found in the axon. It carries out the reaction beta-nicotinamide D-ribonucleotide + ATP + H(+) = diphosphate + NAD(+). It catalyses the reaction nicotinate beta-D-ribonucleotide + ATP + H(+) = deamido-NAD(+) + diphosphate. The protein operates within cofactor biosynthesis; NAD(+) biosynthesis; NAD(+) from nicotinamide D-ribonucleotide: step 1/1. It functions in the pathway cofactor biosynthesis; NAD(+) biosynthesis; deamido-NAD(+) from nicotinate D-ribonucleotide: step 1/1. Its activity is regulated as follows. Inhibited by P1-(adenosine-5')-P3-(nicotinamide-riboside-5')-triphosphate (Np3AD) and P1-(adenosine-5')-P4-(nicotinamide-riboside-5')-tetraphosphate (Np4AD). Its function is as follows. Nicotinamide/nicotinate-nucleotide adenylyltransferase that acts as an axon maintenance factor. Axon survival factor required for the maintenance of healthy axons: acts by delaying Wallerian axon degeneration, an evolutionarily conserved process that drives the loss of damaged axons. Catalyzes the formation of NAD(+) from nicotinamide mononucleotide (NMN) and ATP. Can also use the deamidated form; nicotinic acid mononucleotide (NaMN) as substrate but with a lower efficiency. Cannot use triazofurin monophosphate (TrMP) as substrate. Also catalyzes the reverse reaction, i.e. the pyrophosphorolytic cleavage of NAD(+). For the pyrophosphorolytic activity prefers NAD(+), NADH and NaAD as substrates and degrades nicotinic acid adenine dinucleotide phosphate (NHD) less effectively. Fails to cleave phosphorylated dinucleotides NADP(+), NADPH and NaADP(+). Also acts as an activator of ADP-ribosylation by supporting the catalytic activity of PARP16 and promoting mono-ADP-ribosylation of ribosomes by PARP16. May be involved in the maintenance of axonal integrity. This chain is Nicotinamide/nicotinic acid mononucleotide adenylyltransferase 2 (Nmnat2), found in Rattus norvegicus (Rat).